A 75-amino-acid chain; its full sequence is Putative defensin-like protein 55 (75 aa).

An N-terminal signal peptide occupies residues 1–19 (MNITKAYVIFFLVVILTNS). 4 cysteine pairs are disulfide-bonded: C39/C73, C43/C66, C52/C71, and C56/C72.

It belongs to the DEFL family.

The protein localises to the secreted. This is Putative defensin-like protein 55 from Arabidopsis thaliana (Mouse-ear cress).